Reading from the N-terminus, the 365-residue chain is Caffeic acid 3-O-methyltransferase 1 (365 aa).

Residue 130 to 136 participates in substrate binding; the sequence is MNQDKVL. Residues 162 to 180 form a substrate binding region; it reads AFEYHGTDPRFNKVFNKGM. S-adenosyl-L-methionine contacts are provided by glycine 208, aspartate 231, aspartate 251, methionine 252, and lysine 265. Histidine 269 acts as the Proton acceptor in catalysis.

The protein belongs to the class I-like SAM-binding methyltransferase superfamily. Cation-independent O-methyltransferase family. COMT subfamily. Homodimer.

The catalysed reaction is (E)-caffeate + S-adenosyl-L-methionine = (E)-ferulate + S-adenosyl-L-homocysteine + H(+). Its pathway is aromatic compound metabolism; phenylpropanoid biosynthesis. Catalyzes the conversion of caffeic acid to ferulic acid and of 5-hydroxyferulic acid to sinapic acid. The resulting products may subsequently be converted to the corresponding alcohols that are incorporated into lignins. The chain is Caffeic acid 3-O-methyltransferase 1 (HOMT1) from Populus kitakamiensis (Aspen).